The primary structure comprises 179 residues: NAD(P)H-quinone oxidoreductase subunit I, chloroplastic (179 aa).

2 4Fe-4S ferredoxin-type domains span residues 55-84 (GRIHFEFDKCIACEVCVRVCPIDLPVVDWR) and 95-124 (LNYSIDFGVCIFCGNCVEYCPTNCLSMTEE). [4Fe-4S] cluster-binding residues include Cys64, Cys67, Cys70, Cys74, Cys104, Cys107, Cys110, and Cys114.

Belongs to the complex I 23 kDa subunit family. NDH is composed of at least 16 different subunits, 5 of which are encoded in the nucleus. [4Fe-4S] cluster is required as a cofactor.

It is found in the plastid. Its subcellular location is the chloroplast thylakoid membrane. It catalyses the reaction a plastoquinone + NADH + (n+1) H(+)(in) = a plastoquinol + NAD(+) + n H(+)(out). It carries out the reaction a plastoquinone + NADPH + (n+1) H(+)(in) = a plastoquinol + NADP(+) + n H(+)(out). Functionally, NDH shuttles electrons from NAD(P)H:plastoquinone, via FMN and iron-sulfur (Fe-S) centers, to quinones in the photosynthetic chain and possibly in a chloroplast respiratory chain. The immediate electron acceptor for the enzyme in this species is believed to be plastoquinone. Couples the redox reaction to proton translocation, and thus conserves the redox energy in a proton gradient. This is NAD(P)H-quinone oxidoreductase subunit I, chloroplastic from Acorus calamus (Sweet flag).